The following is a 91-amino-acid chain: Large ribosomal subunit protein bL28 (91 aa).

A disordered region spans residues 1–23 (MSRVCELTGKGPMSGNNVSHANN).

Belongs to the bacterial ribosomal protein bL28 family.

The sequence is that of Large ribosomal subunit protein bL28 from Paracoccus denitrificans (strain Pd 1222).